Here is a 238-residue protein sequence, read N- to C-terminus: Ribonuclease PH (238 aa).

Residues Arg-86 and 124-126 (GTR) contribute to the phosphate site.

This sequence belongs to the RNase PH family. As to quaternary structure, homohexameric ring arranged as a trimer of dimers.

The enzyme catalyses tRNA(n+1) + phosphate = tRNA(n) + a ribonucleoside 5'-diphosphate. In terms of biological role, phosphorolytic 3'-5' exoribonuclease that plays an important role in tRNA 3'-end maturation. Removes nucleotide residues following the 3'-CCA terminus of tRNAs; can also add nucleotides to the ends of RNA molecules by using nucleoside diphosphates as substrates, but this may not be physiologically important. Probably plays a role in initiation of 16S rRNA degradation (leading to ribosome degradation) during starvation. The protein is Ribonuclease PH of Psychrobacter cryohalolentis (strain ATCC BAA-1226 / DSM 17306 / VKM B-2378 / K5).